A 76-amino-acid chain; its full sequence is Defensin-like protein 5 (76 aa).

The first 29 residues, 1 to 29 (MKVSPRLNSALLLLFMILATVMGLVTVEA), serve as a signal peptide directing secretion. 4 cysteine pairs are disulfide-bonded: Cys32–Cys76, Cys43–Cys63, Cys49–Cys70, and Cys53–Cys72.

The protein belongs to the DEFL family.

The protein resides in the secreted. Confers broad-spectrum resistance to pathogens. This chain is Defensin-like protein 5 (PDF2.4), found in Arabidopsis thaliana (Mouse-ear cress).